A 375-amino-acid chain; its full sequence is Putative glutamate--cysteine ligase 2 (375 aa).

This sequence belongs to the glutamate--cysteine ligase type 2 family. YbdK subfamily.

The catalysed reaction is L-cysteine + L-glutamate + ATP = gamma-L-glutamyl-L-cysteine + ADP + phosphate + H(+). ATP-dependent carboxylate-amine ligase which exhibits weak glutamate--cysteine ligase activity. This Azoarcus sp. (strain BH72) protein is Putative glutamate--cysteine ligase 2.